The chain runs to 348 residues: Secreted frizzled-related protein 4 (348 aa).

An N-terminal signal peptide occupies residues methionine 1 to glycine 18. Residues valine 19–proline 139 enclose the FZ domain. Disulfide bonds link cysteine 24–cysteine 85, cysteine 32–cysteine 78, cysteine 69–cysteine 108, cysteine 97–cysteine 136, and cysteine 101–cysteine 125. N-linked (GlcNAc...) asparagine glycosylation is found at asparagine 38 and asparagine 68. Asparagine 116, asparagine 194, and asparagine 240 each carry an N-linked (GlcNAc...) asparagine glycan. One can recognise an NTR domain in the interval cysteine 178–arginine 296. Residues glutamate 289–glutamine 303 show a composition bias toward basic and acidic residues. A disordered region spans residues glutamate 289 to serine 348. Residues lysine 330–serine 348 are compositionally biased toward basic residues.

It belongs to the secreted frizzled-related protein (sFRP) family. In terms of tissue distribution, expressed in the involuting mammary gland, ovarian corpus luteum and prostate. In ovaries, low levels found in granulosa cells. High levels in corpora lutea of pregnant animals.

The protein resides in the secreted. Soluble frizzled-related proteins (sFRPS) function as modulators of Wnt signaling through direct interaction with Wnts. They have a role in regulating cell growth and differentiation in specific cell types. SFRP4 plays a role in bone morphogenesis. May also act as a regulator of adult uterine morphology and function. May also increase apoptosis during ovulation possibly through modulation of FZ1/FZ4/WNT4 signaling. Has phosphaturic effects by specifically inhibiting sodium-dependent phosphate uptake. The chain is Secreted frizzled-related protein 4 (Sfrp4) from Rattus norvegicus (Rat).